The chain runs to 379 residues: MKAFGDGQDTEDYLNLFLSGAPLLDTRAPVEFHKGAFPGAVNLPLMTDDERAQVGRCYKRHGQQAAIELGHRLAHGAVKESRVQGWREFAQRHPQGYLYCFRGGLRSSICQQWLAESGVAYPRVLGGYKAMRRFLIESLESICQEARLVLLAGHTGGGKTDLLARIPGAVDLERLAHHRGSAFGRRADGQPSQIDFENALAVALLRQRHGFANAPLLLEDESHLIGRCALPQSLRRAMAQAPLVVVEVALEQRVEHSFRNYILHKLDEWRRRQGEDEGFERFADDLRQSMYNIRTRLGGLRYQQLSEMLEAALARHRQGDPAYHRDWIRCLLEDYYDPMYAYQLQKRAERICFRGDAAAVRDYFAHSSSTTATVRDKRL.

One can recognise a Rhodanese domain in the interval 17-140 (FLSGAPLLDT…MRRFLIESLE (124 aa)). The active-site S-selanylcysteine intermediate is the C100.

The protein belongs to the SelU family. Monomer.

It catalyses the reaction 5-methylaminomethyl-2-thiouridine(34) in tRNA + selenophosphate + (2E)-geranyl diphosphate + H2O + H(+) = 5-methylaminomethyl-2-selenouridine(34) in tRNA + (2E)-thiogeraniol + phosphate + diphosphate. The enzyme catalyses 5-methylaminomethyl-2-thiouridine(34) in tRNA + (2E)-geranyl diphosphate = 5-methylaminomethyl-S-(2E)-geranyl-thiouridine(34) in tRNA + diphosphate. It carries out the reaction 5-methylaminomethyl-S-(2E)-geranyl-thiouridine(34) in tRNA + selenophosphate + H(+) = 5-methylaminomethyl-2-(Se-phospho)selenouridine(34) in tRNA + (2E)-thiogeraniol. The catalysed reaction is 5-methylaminomethyl-2-(Se-phospho)selenouridine(34) in tRNA + H2O = 5-methylaminomethyl-2-selenouridine(34) in tRNA + phosphate. Involved in the post-transcriptional modification of the uridine at the wobble position (U34) of tRNA(Lys), tRNA(Glu) and tRNA(Gln). Catalyzes the conversion of 2-thiouridine (S2U-RNA) to 2-selenouridine (Se2U-RNA). Acts in a two-step process involving geranylation of 2-thiouridine (S2U) to S-geranyl-2-thiouridine (geS2U) and subsequent selenation of the latter derivative to 2-selenouridine (Se2U) in the tRNA chain. This Hahella chejuensis (strain KCTC 2396) protein is tRNA 2-selenouridine synthase.